Here is a 324-residue protein sequence, read N- to C-terminus: Lipoyl synthase (324 aa).

Residues Cys-65, Cys-70, Cys-76, Cys-91, Cys-95, Cys-98, and Ser-302 each contribute to the [4Fe-4S] cluster site. Positions 77 to 291 (WEDREATFLI…AQYAEGLGFA (215 aa)) constitute a Radical SAM core domain.

Belongs to the radical SAM superfamily. Lipoyl synthase family. Requires [4Fe-4S] cluster as cofactor.

The protein resides in the cytoplasm. It catalyses the reaction [[Fe-S] cluster scaffold protein carrying a second [4Fe-4S](2+) cluster] + N(6)-octanoyl-L-lysyl-[protein] + 2 oxidized [2Fe-2S]-[ferredoxin] + 2 S-adenosyl-L-methionine + 4 H(+) = [[Fe-S] cluster scaffold protein] + N(6)-[(R)-dihydrolipoyl]-L-lysyl-[protein] + 4 Fe(3+) + 2 hydrogen sulfide + 2 5'-deoxyadenosine + 2 L-methionine + 2 reduced [2Fe-2S]-[ferredoxin]. The protein operates within protein modification; protein lipoylation via endogenous pathway; protein N(6)-(lipoyl)lysine from octanoyl-[acyl-carrier-protein]: step 2/2. Catalyzes the radical-mediated insertion of two sulfur atoms into the C-6 and C-8 positions of the octanoyl moiety bound to the lipoyl domains of lipoate-dependent enzymes, thereby converting the octanoylated domains into lipoylated derivatives. This is Lipoyl synthase from Mycobacterium ulcerans (strain Agy99).